The primary structure comprises 736 residues: RNA-binding protein RMD9-like, mitochondrial (736 aa).

Disordered stretches follow at residues 1–28 (MFRFAQPANVLKGKAPSQIVPPHPKTNS), 124–148 (PRRSNMRNNGNNNMNNGRRTEHPNT), and 566–618 (NRGI…GTPV). The N-terminal 79 residues, 1–79 (MFRFAQPANV…HFKNQFSSRN (79 aa)), are a transit peptide targeting the mitochondrion. Over residues 125–140 (RRSNMRNNGNNNMNNG) the composition is skewed to low complexity. A compositionally biased stretch (polar residues) spans 566–578 (NRGISSSSPMSAV). Residues 579–596 (NSLAPSTTNTPSPSLSPI) are compositionally biased toward low complexity. Polar residues predominate over residues 602-613 (LSSARNTPNKIW).

The protein belongs to the RMD9 family. In terms of assembly, monomer. In terms of processing, phosphorylated. Phosphorylation promotes binding to RNA.

The protein localises to the mitochondrion inner membrane. In terms of biological role, may be involved in the processing or stability of mitochondrial mRNAs. The sequence is that of RNA-binding protein RMD9-like, mitochondrial from Candida glabrata (strain ATCC 2001 / BCRC 20586 / JCM 3761 / NBRC 0622 / NRRL Y-65 / CBS 138) (Yeast).